The following is a 440-amino-acid chain: Kinetochore protein NUF2 homolog (440 aa).

Coiled coils occupy residues 142–239 (LGLL…LRSQ) and 299–386 (INEQ…RQTN).

It belongs to the NUF2 family. As to quaternary structure, component of the NDC80 complex, which consists of NDC80, NUF2, SPC24 and SPC25.

It localises to the chromosome. It is found in the centromere. In terms of biological role, acts as a component of the essential kinetochore-associated NDC80 complex, which is required for chromosome segregation and spindle checkpoint activity to ensure proper cell division. This is Kinetochore protein NUF2 homolog from Arabidopsis thaliana (Mouse-ear cress).